Reading from the N-terminus, the 442-residue chain is Serine--tRNA ligase (442 aa).

244 to 246 provides a ligand contact to L-serine; it reads TAE. Residue 275-277 coordinates ATP; it reads RAE. Glu-298 serves as a coordination point for L-serine. 365–368 serves as a coordination point for ATP; it reads EISS. Ser-400 provides a ligand contact to L-serine.

This sequence belongs to the class-II aminoacyl-tRNA synthetase family. Type-1 seryl-tRNA synthetase subfamily. Homodimer. The tRNA molecule binds across the dimer.

It localises to the cytoplasm. The catalysed reaction is tRNA(Ser) + L-serine + ATP = L-seryl-tRNA(Ser) + AMP + diphosphate + H(+). It catalyses the reaction tRNA(Sec) + L-serine + ATP = L-seryl-tRNA(Sec) + AMP + diphosphate + H(+). It functions in the pathway aminoacyl-tRNA biosynthesis; selenocysteinyl-tRNA(Sec) biosynthesis; L-seryl-tRNA(Sec) from L-serine and tRNA(Sec): step 1/1. Catalyzes the attachment of serine to tRNA(Ser). Is also able to aminoacylate tRNA(Sec) with serine, to form the misacylated tRNA L-seryl-tRNA(Sec), which will be further converted into selenocysteinyl-tRNA(Sec). The sequence is that of Serine--tRNA ligase from Bradyrhizobium sp. (strain ORS 278).